A 398-amino-acid chain; its full sequence is Phosphoglycerate kinase (398 aa).

Substrate is bound by residues 21–23 (DFN), Arg36, 59–62 (HLGR), Arg119, and Arg157. Residues Lys208, Gly296, Glu327, and 354 to 357 (GGDS) each bind ATP.

It belongs to the phosphoglycerate kinase family. As to quaternary structure, monomer.

It is found in the cytoplasm. It carries out the reaction (2R)-3-phosphoglycerate + ATP = (2R)-3-phospho-glyceroyl phosphate + ADP. Its pathway is carbohydrate degradation; glycolysis; pyruvate from D-glyceraldehyde 3-phosphate: step 2/5. The polypeptide is Phosphoglycerate kinase (pgk) (Streptococcus pyogenes serotype M1).